Here is a 127-residue protein sequence, read N- to C-terminus: Large ribosomal subunit protein uL22 (127 aa).

It belongs to the universal ribosomal protein uL22 family. As to quaternary structure, part of the 50S ribosomal subunit.

Its function is as follows. This protein binds specifically to 23S rRNA; its binding is stimulated by other ribosomal proteins, e.g. L4, L17, and L20. It is important during the early stages of 50S assembly. It makes multiple contacts with different domains of the 23S rRNA in the assembled 50S subunit and ribosome. The globular domain of the protein is located near the polypeptide exit tunnel on the outside of the subunit, while an extended beta-hairpin is found that lines the wall of the exit tunnel in the center of the 70S ribosome. This is Large ribosomal subunit protein uL22 from Methylorubrum populi (strain ATCC BAA-705 / NCIMB 13946 / BJ001) (Methylobacterium populi).